Here is a 564-residue protein sequence, read N- to C-terminus: Aspyridones efflux protein (564 aa).

Low complexity predominate over residues Met1–Thr17. Residues Met1–Thr49 are disordered. Residues Cys19 to Glu47 show a composition bias toward basic and acidic residues. 10 consecutive transmembrane segments (helical) span residues Ala66–Pro86, Trp127–Pro147, Ile158–Val178, Leu185–Gly205, Trp216–Phe236, Val260–Gly280, Ser287–Val307, Phe335–Val355, Leu368–Ile388, and Ala392–Phe412. Asn415 carries an N-linked (GlcNAc...) asparagine glycan. 2 consecutive transmembrane segments (helical) span residues Val416 to Trp436 and Ile454 to Ala474. A glycan (N-linked (GlcNAc...) asparagine) is linked at Asn524. Residues Leu528–Val548 traverse the membrane as a helical segment.

This sequence belongs to the major facilitator superfamily. TCR/Tet family.

The protein localises to the cell membrane. Its function is as follows. Efflux pump that may be involved in the secretion of leporins. In Neocamarosporium betae (Beet black rot fungus), this protein is Aspyridones efflux protein (TP).